The sequence spans 289 residues: Oxaloacetate decarboxylase (289 aa).

Serine 50 is a binding site for substrate. Position 88 (aspartate 88) interacts with Mg(2+). Substrate contacts are provided by arginine 159 and histidine 235.

Belongs to the isocitrate lyase/PEP mutase superfamily. Oxaloacetate decarboxylase family. Homotetramer; dimer of dimers. Requires Mg(2+) as cofactor.

It catalyses the reaction oxaloacetate + H(+) = pyruvate + CO2. In terms of biological role, catalyzes the decarboxylation of oxaloacetate into pyruvate. Seems to play a role in maintaining cellular concentrations of bicarbonate and pyruvate. This Pseudomonas entomophila (strain L48) protein is Oxaloacetate decarboxylase.